A 394-amino-acid polypeptide reads, in one-letter code: Protein-glutamate methylesterase/protein-glutamine glutaminase of group 2 operon (394 aa).

One can recognise a Response regulatory domain in the interval 21–139 (RVMVVDDSAV…ELTGADTFKR (119 aa)). Asp72 is modified (4-aspartylphosphate). A disordered region spans residues 148-201 (LGAAARRSGPRREGTAAARPPGAAAQPTSGYTLPSPVRAKPETGPLTVRPLPPD). The span at 162–172 (TAAARPPGAAA) shows a compositional bias: low complexity. The 183-residue stretch at 200–382 (PDGRPDVIAI…SAILPLKEIG (183 aa)) folds into the CheB-type methylesterase domain. Catalysis depends on residues Ser212, His238, and Asp334.

It belongs to the CheB family. Post-translationally, phosphorylated by CheA. Phosphorylation of the N-terminal regulatory domain activates the methylesterase activity.

It localises to the cytoplasm. It catalyses the reaction [protein]-L-glutamate 5-O-methyl ester + H2O = L-glutamyl-[protein] + methanol + H(+). The catalysed reaction is L-glutaminyl-[protein] + H2O = L-glutamyl-[protein] + NH4(+). Functionally, involved in chemotaxis. Part of a chemotaxis signal transduction system that modulates chemotaxis in response to various stimuli. Catalyzes the demethylation of specific methylglutamate residues introduced into the chemoreceptors (methyl-accepting chemotaxis proteins or MCP) by CheR. Also mediates the irreversible deamidation of specific glutamine residues to glutamic acid. The chain is Protein-glutamate methylesterase/protein-glutamine glutaminase of group 2 operon from Rhodospirillum centenum (strain ATCC 51521 / SW).